The chain runs to 137 residues: Putative pre-16S rRNA nuclease (137 aa).

Belongs to the YqgF nuclease family.

It is found in the cytoplasm. Could be a nuclease involved in processing of the 5'-end of pre-16S rRNA. This Bacillus cereus (strain G9842) protein is Putative pre-16S rRNA nuclease.